We begin with the raw amino-acid sequence, 889 residues long: Alanine--tRNA ligase (889 aa).

Zn(2+) is bound by residues H569, H573, C671, and H675.

This sequence belongs to the class-II aminoacyl-tRNA synthetase family. Requires Zn(2+) as cofactor.

The protein resides in the cytoplasm. It carries out the reaction tRNA(Ala) + L-alanine + ATP = L-alanyl-tRNA(Ala) + AMP + diphosphate. Catalyzes the attachment of alanine to tRNA(Ala) in a two-step reaction: alanine is first activated by ATP to form Ala-AMP and then transferred to the acceptor end of tRNA(Ala). Also edits incorrectly charged Ser-tRNA(Ala) and Gly-tRNA(Ala) via its editing domain. The polypeptide is Alanine--tRNA ligase (Parasynechococcus marenigrum (strain WH8102)).